We begin with the raw amino-acid sequence, 493 residues long: Glutamate--tRNA ligase (493 aa).

A 'HIGH' region motif is present at residues 10-20 (PSPTGDPHVGT). A 'KMSKS' region motif is present at residues 251–255 (KLSKR). Lys254 lines the ATP pocket.

The protein belongs to the class-I aminoacyl-tRNA synthetase family. Glutamate--tRNA ligase type 1 subfamily. In terms of assembly, monomer.

The protein resides in the cytoplasm. The enzyme catalyses tRNA(Glu) + L-glutamate + ATP = L-glutamyl-tRNA(Glu) + AMP + diphosphate. In terms of biological role, catalyzes the attachment of glutamate to tRNA(Glu) in a two-step reaction: glutamate is first activated by ATP to form Glu-AMP and then transferred to the acceptor end of tRNA(Glu). This Pseudomonas putida (strain ATCC 700007 / DSM 6899 / JCM 31910 / BCRC 17059 / LMG 24140 / F1) protein is Glutamate--tRNA ligase.